A 340-amino-acid polypeptide reads, in one-letter code: Putative RRN3-like protein RRN3P2 (340 aa).

It belongs to the RRN3 family.

This chain is Putative RRN3-like protein RRN3P2 (RRN3P2), found in Homo sapiens (Human).